Reading from the N-terminus, the 206-residue chain is Adenylate kinase (206 aa).

10-15 (GAGKGT) provides a ligand contact to ATP. The interval 30–59 (STGDILREAVQKGTPLGKKAKEYMERGELV) is NMP. AMP-binding positions include threonine 31, 57 to 59 (ELV), 82 to 85 (GFPR), and glutamine 89. Residues arginine 120, arginine 124, and 133 to 134 (VY) contribute to the ATP site. Residues 123-153 (GRRINPETGEVYHVKYNPPPPGVKVIQREDD) form an LID region. An AMP-binding site is contributed by arginine 161. Residue lysine 189 coordinates ATP.

This sequence belongs to the adenylate kinase family. In terms of assembly, monomer.

It is found in the cytoplasm. The catalysed reaction is AMP + ATP = 2 ADP. It functions in the pathway purine metabolism; AMP biosynthesis via salvage pathway; AMP from ADP: step 1/1. Functionally, catalyzes the reversible transfer of the terminal phosphate group between ATP and AMP. Plays an important role in cellular energy homeostasis and in adenine nucleotide metabolism. The chain is Adenylate kinase from Aquifex aeolicus (strain VF5).